Consider the following 510-residue polypeptide: NAD(P)H-quinone oxidoreductase subunit 2 A, chloroplastic (510 aa).

Helical transmembrane passes span 31 to 51 (FIFP…IDLT), 57 to 77 (TPWL…ALLF), 99 to 119 (IFQF…VEYI), 124 to 144 (MAIT…MFLC), 149 to 169 (LITI…LSGY), 183 to 203 (YLLM…WLYG), 229 to 249 (ISIA…PAPF), 295 to 315 (WHLL…LIAI), 323 to 343 (MLAY…IVGD), 354 to 374 (YMLF…LFGL), 395 to 415 (ALSS…AGFF), 418 to 438 (LYLF…IGLL), and 484 to 504 (MIVC…IIAI).

This sequence belongs to the complex I subunit 2 family. In terms of assembly, NDH is composed of at least 16 different subunits, 5 of which are encoded in the nucleus.

The protein resides in the plastid. Its subcellular location is the chloroplast thylakoid membrane. The enzyme catalyses a plastoquinone + NADH + (n+1) H(+)(in) = a plastoquinol + NAD(+) + n H(+)(out). It catalyses the reaction a plastoquinone + NADPH + (n+1) H(+)(in) = a plastoquinol + NADP(+) + n H(+)(out). Its function is as follows. NDH shuttles electrons from NAD(P)H:plastoquinone, via FMN and iron-sulfur (Fe-S) centers, to quinones in the photosynthetic chain and possibly in a chloroplast respiratory chain. The immediate electron acceptor for the enzyme in this species is believed to be plastoquinone. Couples the redox reaction to proton translocation, and thus conserves the redox energy in a proton gradient. This Nymphaea alba (White water-lily) protein is NAD(P)H-quinone oxidoreductase subunit 2 A, chloroplastic.